The primary structure comprises 1704 residues: Nonribosomal peptide synthetase ivoA (1704 aa).

An adenylation region spans residues 234–620 (EEQAIARPDQ…HGRKDLEVKI (387 aa)). Residues 748 to 827 (NLISDPSDSM…EMATKTSAVE (80 aa)) enclose the Carrier domain. Ser785 carries the O-(pantetheine 4'-phosphoryl)serine modification. Residues 840–1266 (FPLSPVQQMY…QELLETAVER (427 aa)) are epimerization (E) domain. Residues 1325–1477 (VQGDWTIEKT…AQSSTPSARK (153 aa)) form a condensation region.

Belongs to the NRP synthetase family.

It carries out the reaction L-tryptophan + ATP + H2O = D-tryptophan + AMP + diphosphate + H(+). The protein operates within pigment biosynthesis. Its function is as follows. Nonribosomal peptide synthetase; part of the pathway that mediates the biosynthesis of the gray-brown conidiophore pigment. The first step of the pathway is performed by the nonribosomal peptide synthetase ivoA that catalyzes ATP-dependent unidirectional stereoinversion of L-tryptophan to D-tryptophan with complete conversion. While the stereoinversion is catalyzed by the epimerization (E) domain of ivoA, the terminal condensation (C) domain stereoselectively hydrolyzes D-tryptophanyl-S-phosphopantetheine thioester and thus represents a non-canonical C domain function. D-tryptophan is acetylated, probably by an endogenous acetyltransferase. N-acetyltryptophan is further 6-hydroxylated into N-acetyl-6-hydroxytryptophan (AHT) by the cytochrome P450 monooxygenase ivoC. N-acetyl-6-hydroxytryptophan is substrate of the N-acetyl-6-hydroxytryptophan oxidase ivoB to produce the gray-brown conidiophore pigment. The protein is Nonribosomal peptide synthetase ivoA of Emericella nidulans (strain FGSC A4 / ATCC 38163 / CBS 112.46 / NRRL 194 / M139) (Aspergillus nidulans).